Reading from the N-terminus, the 531-residue chain is tRNA(Ile)-lysidine synthase (531 aa).

32 to 37 (SGGMDS) lines the ATP pocket.

It belongs to the tRNA(Ile)-lysidine synthase family.

It is found in the cytoplasm. The catalysed reaction is cytidine(34) in tRNA(Ile2) + L-lysine + ATP = lysidine(34) in tRNA(Ile2) + AMP + diphosphate + H(+). In terms of biological role, ligates lysine onto the cytidine present at position 34 of the AUA codon-specific tRNA(Ile) that contains the anticodon CAU, in an ATP-dependent manner. Cytidine is converted to lysidine, thus changing the amino acid specificity of the tRNA from methionine to isoleucine. The sequence is that of tRNA(Ile)-lysidine synthase from Blochmanniella floridana.